The sequence spans 511 residues: Maturase K (511 aa).

This sequence belongs to the intron maturase 2 family. MatK subfamily.

It is found in the plastid. It localises to the chloroplast. Its function is as follows. Usually encoded in the trnK tRNA gene intron. Probably assists in splicing its own and other chloroplast group II introns. This chain is Maturase K, found in Maihuenia poeppigii (Hardy cactus).